A 662-amino-acid polypeptide reads, in one-letter code: Tubulin--tyrosine ligase-like protein 12 (662 aa).

The region spanning 324-660 (LKKRKIKVYA…LDEIDPTKVT (337 aa)) is the TTL domain. Residues 472-475 (CEYI), K491, and D493 each bind ATP.

This sequence belongs to the tubulin--tyrosine ligase family.

Functionally, regulates microtubule dynamics in uterine muscle cells. The protein is Tubulin--tyrosine ligase-like protein 12 of Caenorhabditis elegans.